We begin with the raw amino-acid sequence, 807 residues long: Probable phosphoketolase (807 aa).

Belongs to the XFP family. Requires thiamine diphosphate as cofactor.

In Nitrosospira multiformis (strain ATCC 25196 / NCIMB 11849 / C 71), this protein is Probable phosphoketolase.